The primary structure comprises 104 residues: Cytochrome c-551 (104 aa).

The signal sequence occupies residues 1 to 22 (MKPYALLSLLATGTLLAQGAWA). Residues Cys-34, Cys-37, His-38, and Met-83 each contribute to the heme c site.

Post-translationally, binds 1 heme c group covalently per subunit.

Its subcellular location is the periplasm. In terms of biological role, electron donor for cytochrome cd1 in nitrite and nitrate respiration. This is Cytochrome c-551 (nirM) from Pseudomonas aeruginosa (strain ATCC 15692 / DSM 22644 / CIP 104116 / JCM 14847 / LMG 12228 / 1C / PRS 101 / PAO1).